The chain runs to 221 residues: 5'-nucleotidase (221 aa).

Asp-14 functions as the Nucleophile in the catalytic mechanism.

This sequence belongs to the HAD-like hydrolase superfamily. Requires Mn(2+) as cofactor. The cofactor is Mg(2+).

It catalyses the reaction a ribonucleoside 5'-phosphate + H2O = a ribonucleoside + phosphate. Its function is as follows. Specifically dephosphorylates nucleoside 5'-monophosphates to nucleosides and inorganic phosphate. Displays high activity toward 5'-UMP and 5'-IMP, significant activity against 5'-XMP and 5'-TMP, and low activity against 5'-CMP. The chain is 5'-nucleotidase from Pseudomonas aeruginosa (strain ATCC 15692 / DSM 22644 / CIP 104116 / JCM 14847 / LMG 12228 / 1C / PRS 101 / PAO1).